Consider the following 374-residue polypeptide: Ribosomal RNA large subunit methyltransferase G (374 aa).

The protein belongs to the methyltransferase superfamily. RlmG family.

It is found in the cytoplasm. It carries out the reaction guanosine(1835) in 23S rRNA + S-adenosyl-L-methionine = N(2)-methylguanosine(1835) in 23S rRNA + S-adenosyl-L-homocysteine + H(+). In terms of biological role, specifically methylates the guanine in position 1835 (m2G1835) of 23S rRNA. In Pseudomonas aeruginosa (strain ATCC 15692 / DSM 22644 / CIP 104116 / JCM 14847 / LMG 12228 / 1C / PRS 101 / PAO1), this protein is Ribosomal RNA large subunit methyltransferase G.